The sequence spans 319 residues: Cobalamin biosynthesis protein CbiB (319 aa).

Helical transmembrane passes span 56–76, 82–102, 153–173, and 296–316; these read VMWVVVVGVTWGVAWGVLALA, WFGWSVEVWMIFTTLAGRSLA, VDGIIAPLFFLFLGGAPLAMA, and LMWVASTLALALFIAARCGLS.

Belongs to the CobD/CbiB family.

The protein localises to the cell membrane. The protein operates within cofactor biosynthesis; adenosylcobalamin biosynthesis. In terms of biological role, converts cobyric acid to cobinamide by the addition of aminopropanol on the F carboxylic group. However, the true cosubstrate could be (R)-1-amino-2-propanol O-2-phosphate, leading to cobinamide phosphate. This chain is Cobalamin biosynthesis protein CbiB, found in Salmonella paratyphi A (strain ATCC 9150 / SARB42).